A 361-amino-acid chain; its full sequence is Fructose-1,6-bisphosphatase class 1 2 (361 aa).

Mg(2+) is bound by residues Glu110, Asp134, Leu136, and Asp137. Substrate is bound by residues 137 to 140, Asn231, Tyr264, and Lys294; that span reads DGSS. Residue Glu300 coordinates Mg(2+).

This sequence belongs to the FBPase class 1 family. As to quaternary structure, homotetramer. Mg(2+) serves as cofactor.

It is found in the cytoplasm. It catalyses the reaction beta-D-fructose 1,6-bisphosphate + H2O = beta-D-fructose 6-phosphate + phosphate. The protein operates within carbohydrate biosynthesis; gluconeogenesis. The polypeptide is Fructose-1,6-bisphosphatase class 1 2 (Salinibacter ruber (strain DSM 13855 / M31)).